The sequence spans 972 residues: Hemoglobin and hemoglobin-haptoglobin-binding protein (972 aa).

The signal sequence occupies residues 1–22; that stretch reads MKANKLSAITLCILGYAHTVYA. The short motif at 32 to 39 is the TonB box element; the sequence is ETIVVSSE. The TBDR plug domain maps to 38–167; the sequence is SEDDSVHNKN…LGGTVSFESK (130 aa). Residues 175–972 form the TBDR beta-barrel domain; that stretch reads DKNYHFGYKT…NFRVNAEITF (798 aa). Positions 955-972 match the TonB C-terminal box motif; it reads KRFNAPGRNFRVNAEITF.

This sequence belongs to the TonB-dependent receptor family. Hemoglobin/haptoglobin binding protein subfamily.

It is found in the cell outer membrane. Its function is as follows. Acts as a receptor for hemoglobin or the hemoglobin/haptoglobin complex of the host and is required for heme uptake. May be involved in virulence. The sequence is that of Hemoglobin and hemoglobin-haptoglobin-binding protein from Haemophilus ducreyi (strain 35000HP / ATCC 700724).